The chain runs to 180 residues: Putative manganese efflux pump MntP (180 aa).

The next 6 helical transmembrane spans lie at 4 to 24 (FVTICIMAAALGMDAFSVALG), 40 to 60 (LTIGLFHVAMPLAGMAVGKWL), 64 to 84 (FDVIATYIGGGLLLVIGVQMA), 103 to 123 (LLLFAVGVSLDSFSAGLSFGI), 129 to 149 (FVTVGMIGAMSMVMSWIGLIV), and 156 to 176 (FLGAYGELLGGLVLIGFGLKI).

It belongs to the MntP (TC 9.B.29) family.

It is found in the cell membrane. Functionally, probably functions as a manganese efflux pump. In Shouchella clausii (strain KSM-K16) (Alkalihalobacillus clausii), this protein is Putative manganese efflux pump MntP.